Here is a 330-residue protein sequence, read N- to C-terminus: Methionyl-tRNA formyltransferase (330 aa).

Position 117–120 (117–120) interacts with (6S)-5,6,7,8-tetrahydrofolate; the sequence is SLLP.

The protein belongs to the Fmt family.

It carries out the reaction L-methionyl-tRNA(fMet) + (6R)-10-formyltetrahydrofolate = N-formyl-L-methionyl-tRNA(fMet) + (6S)-5,6,7,8-tetrahydrofolate + H(+). Functionally, attaches a formyl group to the free amino group of methionyl-tRNA(fMet). The formyl group appears to play a dual role in the initiator identity of N-formylmethionyl-tRNA by promoting its recognition by IF2 and preventing the misappropriation of this tRNA by the elongation apparatus. The protein is Methionyl-tRNA formyltransferase of Verminephrobacter eiseniae (strain EF01-2).